We begin with the raw amino-acid sequence, 163 residues long: MAKFLLLALTFGLAHAAMEGPWKTVAIAADRVDKIERGGELRIYCRSLTCEKECKEMKVTFYVNENGQCSLTTITGYLQEDGKTYKTQFQGNNRYKLVDESPENLTFYSENVDRADRKTKLLFILGHGPLTSEQKEKFAELAEEKGIPAGNIREVLITDYCPE.

The N-terminal stretch at 1-16 (MAKFLLLALTFGLAHA) is a signal peptide. 2 disulfides stabilise this stretch: C50–C54 and C69–C161.

This sequence belongs to the calycin superfamily. Lipocalin family. May form a heterodimer with OBP1B. Post-translationally, the N-terminus may be blocked. As to expression, expressed in nasal mucosa (at protein level). Specifically detected in septal and lateral nasal glands.

It is found in the secreted. Its function is as follows. Binds the chemical odorant 2-isobutyl-3-methoxypyrazine. The sequence is that of Odorant-binding protein 1a from Mus musculus (Mouse).